Here is a 933-residue protein sequence, read N- to C-terminus: 2-oxoglutarate dehydrogenase E1 component (933 aa).

The protein belongs to the alpha-ketoglutarate dehydrogenase family. As to quaternary structure, homodimer. Part of the 2-oxoglutarate dehydrogenase (OGDH) complex composed of E1 (2-oxoglutarate dehydrogenase), E2 (dihydrolipoamide succinyltransferase) and E3 (dihydrolipoamide dehydrogenase); the complex contains multiple copies of the three enzymatic components (E1, E2 and E3). Thiamine diphosphate is required as a cofactor.

The catalysed reaction is N(6)-[(R)-lipoyl]-L-lysyl-[protein] + 2-oxoglutarate + H(+) = N(6)-[(R)-S(8)-succinyldihydrolipoyl]-L-lysyl-[protein] + CO2. Functionally, E1 component of the 2-oxoglutarate dehydrogenase (OGDH) complex which catalyzes the decarboxylation of 2-oxoglutarate, the first step in the conversion of 2-oxoglutarate to succinyl-CoA and CO(2). This Staphylococcus saprophyticus subsp. saprophyticus (strain ATCC 15305 / DSM 20229 / NCIMB 8711 / NCTC 7292 / S-41) protein is 2-oxoglutarate dehydrogenase E1 component.